Consider the following 417-residue polypeptide: CinA-like protein (417 aa).

The protein belongs to the CinA family.

The protein is CinA-like protein of Synechococcus sp. (strain RCC307).